Consider the following 606-residue polypeptide: Phosphogluconate dehydratase (606 aa).

The [4Fe-4S] cluster site is built by cysteine 156 and cysteine 223.

This sequence belongs to the IlvD/Edd family. It depends on [4Fe-4S] cluster as a cofactor.

It catalyses the reaction 6-phospho-D-gluconate = 2-dehydro-3-deoxy-6-phospho-D-gluconate + H2O. Its pathway is carbohydrate metabolism; Entner-Doudoroff pathway. Its function is as follows. Catalyzes the dehydration of 6-phospho-D-gluconate to 2-dehydro-3-deoxy-6-phospho-D-gluconate. In Rhizobium meliloti (strain 1021) (Ensifer meliloti), this protein is Phosphogluconate dehydratase.